We begin with the raw amino-acid sequence, 364 residues long: Aminomethyltransferase (364 aa).

Belongs to the GcvT family. As to quaternary structure, the glycine cleavage system is composed of four proteins: P, T, L and H.

It carries out the reaction N(6)-[(R)-S(8)-aminomethyldihydrolipoyl]-L-lysyl-[protein] + (6S)-5,6,7,8-tetrahydrofolate = N(6)-[(R)-dihydrolipoyl]-L-lysyl-[protein] + (6R)-5,10-methylene-5,6,7,8-tetrahydrofolate + NH4(+). In terms of biological role, the glycine cleavage system catalyzes the degradation of glycine. In Geobacillus sp. (strain WCH70), this protein is Aminomethyltransferase.